The sequence spans 566 residues: Urease subunit alpha (566 aa).

The 439-residue stretch at 128-566 (GGIDTHIHFI…LPMAQRYFLF (439 aa)) folds into the Urease domain. Ni(2+) contacts are provided by His133, His135, and Lys216. An N6-carboxylysine modification is found at Lys216. Residue His218 participates in substrate binding. 2 residues coordinate Ni(2+): His245 and His271. His319 serves as the catalytic Proton donor. Asp359 lines the Ni(2+) pocket.

The protein belongs to the metallo-dependent hydrolases superfamily. Urease alpha subunit family. In terms of assembly, heterotrimer of UreA (gamma), UreB (beta) and UreC (alpha) subunits. Three heterotrimers associate to form the active enzyme. Ni cation is required as a cofactor. Post-translationally, carboxylation allows a single lysine to coordinate two nickel ions.

It localises to the cytoplasm. It carries out the reaction urea + 2 H2O + H(+) = hydrogencarbonate + 2 NH4(+). It functions in the pathway nitrogen metabolism; urea degradation; CO(2) and NH(3) from urea (urease route): step 1/1. The protein is Urease subunit alpha of Pseudomonas fluorescens (strain Pf0-1).